The following is a 106-amino-acid chain: UPF0145 protein VV2_1464 (106 aa).

It belongs to the UPF0145 family.

The protein is UPF0145 protein VV2_1464 of Vibrio vulnificus (strain CMCP6).